Reading from the N-terminus, the 602-residue chain is Serine/threonine-protein phosphatase 2A 56 kDa regulatory subunit delta isoform (602 aa).

Basic and acidic residues predominate over residues 1–13; the sequence is MPYKLKKEKEPPK. The interval 1 to 96 is disordered; it reads MPYKLKKEKE…QSSSRFNLSK (96 aa). 5 consecutive repeat copies span residues 37–38, 39–40, 41–42, 43–44, and 45–46. Residues 37-52 form an 8 X 2 AA approximate tandem repeats of Q-P region; it reads QPQPQPQPQPQAQSQP. Positions 46-55 are enriched in low complexity; that stretch reads PQAQSQPPSS. Residues 47 to 48 form a 6; approximate repeat; the sequence is QA. The stretch at 49 to 50 is one 7; approximate repeat; it reads QS. The stretch at 51–52 is repeat 8; sequence QP. Thr63 bears the Phosphothreonine mark. 3 positions are modified to phosphoserine: Ser88, Ser89, and Ser90. An SH3-binding; class I motif is present at residues 523 to 530; it reads RAPPPLPP. A Nuclear localization signal motif is present at residues 548 to 565; that stretch reads KRTVETEAVQMLKDIKKE. Phosphoserine occurs at positions 573 and 598.

The protein belongs to the phosphatase 2A regulatory subunit B56 family. In terms of assembly, PP2A consists of a common heterodimeric core enzyme, composed of a 36 kDa catalytic subunit (subunit C) and a 65 kDa constant regulatory subunit (PR65 or subunit A), that associates with a variety of regulatory subunits. Proteins that associate with the core dimer include three families of regulatory subunits B (the R2/B/PR55/B55, R3/B''/PR72/PR130/PR59 and R5/B'/B56 families), the 48 kDa variable regulatory subunit, viral proteins, and cell signaling molecules. Interacts with the PP2A A subunit PPP2R1A. Interacts with SGO1. Interacts with ADCY8. In terms of tissue distribution, isoform Delta-2 is widely expressed. Isoform Delta-1 is highly expressed in brain.

Its subcellular location is the cytoplasm. The protein localises to the nucleus. The B regulatory subunit might modulate substrate selectivity and catalytic activity, and might also direct the localization of the catalytic enzyme to a particular subcellular compartment. This is Serine/threonine-protein phosphatase 2A 56 kDa regulatory subunit delta isoform (PPP2R5D) from Homo sapiens (Human).